Here is a 1292-residue protein sequence, read N- to C-terminus: Putative late blight resistance protein homolog R1C-3 (1292 aa).

Coiled coils occupy residues 394 to 414 (DSLAFLKNQLQVIQTKFESMQ) and 505 to 526 (RMNEEIVGFEDVIETLRKKLLN). The 288-residue stretch at 505 to 792 (RMNEEIVGFE…SESFVKSCEG (288 aa)) folds into the NB-ARC domain. 538 to 545 (GMPGLGKT) provides a ligand contact to ATP. LRR repeat units follow at residues 842-865 (AEENFLLWINRDQITKPSSCVYSH), 920-944 (FKFLKVLDLEHQVVIDSIPTELFYL), 963-991 (LWNLETLILNRTSAATGKTLLLPSTVWDM), 1066-1089 (PIRLEMLKLHQSNIFNPISFCISA), 1094-1113 (YLELSGFYLDSQYLSETADH), 1114-1142 (LKHLEVLKLYYVEFGDHREWKVSNGMFPQ), and 1163-1187 (FPNLEQLVLRGCRHLMEIPSCFMDI). The HMA domain occupies 1211–1278 (ETQVEDNQNT…KLRNVAYADE (68 aa)).

The protein belongs to the disease resistance NB-LRR family.

The protein localises to the cytoplasm. The protein resides in the membrane. In terms of biological role, confers resistance to late blight (Phytophthora infestans) races carrying the avirulence gene Avr1. Resistance proteins guard the plant against pathogens that contain an appropriate avirulence protein via an indirect interaction with this avirulence protein. That triggers a defense system including the hypersensitive response, which restricts the pathogen growth. This chain is Putative late blight resistance protein homolog R1C-3 (R1C-3), found in Solanum demissum (Wild potato).